The chain runs to 1001 residues: Serine/threonine-protein kinase TAO1 (1001 aa).

Ser-9 carries the post-translational modification Phosphoserine. The 254-residue stretch at 28 to 281 (FTDLREIGHG…SEELLKHMFV (254 aa)) folds into the Protein kinase domain. ATP contacts are provided by residues 34-42 (IGHGSFGAV) and Lys-57. The active-site Proton acceptor is the Asp-151. 2 disordered regions span residues 324 to 380 (PAVE…DKSE) and 404 to 433 (ENYQEEGDPRTRASDPQSPPQVSRHKSHYR). A compositionally biased stretch (low complexity) spans 350–370 (SNQSIPSMSISASSQSSSVNS). A phosphoserine mark is found at Ser-421 and Ser-445. Residues 458 to 651 (SELREQMSGY…QTQKDLEHAM (194 aa)) are a coiled coil. The interval 567–587 (KEELNENQSTPKKEKQEWLSK) is disordered. Over residues 577–587 (PKKEKQEWLSK) the composition is skewed to basic and acidic residues. Position 669 is a phosphothreonine (Thr-669). Residues 754-877 (KAVLKRLKEE…LERQAREIEA (124 aa)) adopt a coiled-coil conformation. The tract at residues 905–1001 (PGASSWSHNP…ISNGSHMSYT (97 aa)) is disordered. Residues 921 to 930 (HWGHPMGGTP) are compositionally biased toward low complexity. Phosphoserine is present on Ser-965. A compositionally biased stretch (polar residues) spans 975–1001 (GGRTEQGMSRSTSVTSQISNGSHMSYT).

It belongs to the protein kinase superfamily. STE Ser/Thr protein kinase family. STE20 subfamily. As to quaternary structure, self-associates. Interacts with MAP2K3. Interacts with SPRED1. Interacts with TESK1; the interaction inhibits TAOK1 kinase activity. Interacts with MAP3K7. Post-translationally, proteolytically processed by caspase-3 (CASP3). Autophosphorylated. Phosphorylated by ATM in response to DNA damage. Phosphorylated by LRRK2.

The protein resides in the cytoplasm. It carries out the reaction L-seryl-[protein] + ATP = O-phospho-L-seryl-[protein] + ADP + H(+). It catalyses the reaction L-threonyl-[protein] + ATP = O-phospho-L-threonyl-[protein] + ADP + H(+). Serine/threonine-protein kinase activity is inhibited by SPRED1. Serine/threonine-protein kinase involved in various processes such as p38/MAPK14 stress-activated MAPK cascade, DNA damage response and regulation of cytoskeleton stability. Phosphorylates MAP2K3, MAP2K6 and MARK2. Acts as an activator of the p38/MAPK14 stress-activated MAPK cascade by mediating phosphorylation and subsequent activation of the upstream MAP2K3 and MAP2K6 kinases. Involved in G-protein coupled receptor signaling to p38/MAPK14. In response to DNA damage, involved in the G2/M transition DNA damage checkpoint by activating the p38/MAPK14 stress-activated MAPK cascade, probably by mediating phosphorylation of MAP2K3 and MAP2K6. Acts as a regulator of cytoskeleton stability by phosphorylating 'Thr-208' of MARK2, leading to activate MARK2 kinase activity and subsequent phosphorylation and detachment of MAPT/TAU from microtubules. Also acts as a regulator of apoptosis: regulates apoptotic morphological changes, including cell contraction, membrane blebbing and apoptotic bodies formation via activation of the MAPK8/JNK cascade. During fetal development, it plays an essential role in the regulation of neuronal differentiation and migration to the cortical plate. In Mus musculus (Mouse), this protein is Serine/threonine-protein kinase TAO1 (Taok1).